We begin with the raw amino-acid sequence, 320 residues long: Tetraspanin-32 (320 aa).

Helical transmembrane passes span 14–34, 60–80, 90–110, and 203–223; these read MLVT…MVTL, WAFS…VLSA, LMAG…QVVF, and SIGL…WFAI.

It belongs to the tetraspanin (TM4SF) family. Expressed ubiquitously at low levels. High levels of expression are confined to hematopoietic tissues including peripheral blood leukocytes, thymus and spleen.

The protein resides in the membrane. This Homo sapiens (Human) protein is Tetraspanin-32 (TSPAN32).